A 570-amino-acid polypeptide reads, in one-letter code: Formate--tetrahydrofolate ligase (570 aa).

An ATP-binding site is contributed by 65–72 (TPHGEGKT).

It belongs to the formate--tetrahydrofolate ligase family.

The catalysed reaction is (6S)-5,6,7,8-tetrahydrofolate + formate + ATP = (6R)-10-formyltetrahydrofolate + ADP + phosphate. Its pathway is one-carbon metabolism; tetrahydrofolate interconversion. In Shewanella putrefaciens (strain CN-32 / ATCC BAA-453), this protein is Formate--tetrahydrofolate ligase.